The sequence spans 136 residues: FK506-binding protein 2 (136 aa).

The N-terminal stretch at 1–17 (MLSQIWILFTFMVCVIA) is a signal peptide. The PPIase FKBP-type domain maps to 45–134 (GDMVSVHYTG…DFDVELVDIA (90 aa)).

Belongs to the FKBP-type PPIase family. FKBP2 subfamily.

It localises to the endoplasmic reticulum. It catalyses the reaction [protein]-peptidylproline (omega=180) = [protein]-peptidylproline (omega=0). Its activity is regulated as follows. Inhibited by both FK506 and rapamycin. Functionally, PPIases accelerate the folding of proteins. It catalyzes the cis-trans isomerization of proline imidic peptide bonds in oligopeptides. The protein is FK506-binding protein 2 (FPR2) of Candida glabrata (strain ATCC 2001 / BCRC 20586 / JCM 3761 / NBRC 0622 / NRRL Y-65 / CBS 138) (Yeast).